The primary structure comprises 186 residues: Peptide deformylase 2 (186 aa).

Fe cation-binding residues include C104 and H146. E147 is an active-site residue. A Fe cation-binding site is contributed by H150.

The protein belongs to the polypeptide deformylase family. Fe(2+) serves as cofactor.

It catalyses the reaction N-terminal N-formyl-L-methionyl-[peptide] + H2O = N-terminal L-methionyl-[peptide] + formate. Its function is as follows. Removes the formyl group from the N-terminal Met of newly synthesized proteins. Requires at least a dipeptide for an efficient rate of reaction. N-terminal L-methionine is a prerequisite for activity but the enzyme has broad specificity at other positions. The polypeptide is Peptide deformylase 2 (Streptomyces avermitilis (strain ATCC 31267 / DSM 46492 / JCM 5070 / NBRC 14893 / NCIMB 12804 / NRRL 8165 / MA-4680)).